A 793-amino-acid chain; its full sequence is Peroxidase-like protein (793 aa).

The N-terminal stretch at 1–20 (MNLFICHVFLLLLHGYLIIC) is a signal peptide.

Belongs to the peroxidase family. As to expression, prismatic layer of shell (at protein level). Expressed primarily in the mantle with highest level in the mantle edge and lower level in the mantle pallium.

The protein localises to the secreted. The protein is Peroxidase-like protein of Margaritifera margaritifera (Freshwater pearl mussel).